Reading from the N-terminus, the 341-residue chain is Phosphoribosylformylglycinamidine cyclo-ligase (341 aa).

The protein belongs to the AIR synthase family.

It localises to the cytoplasm. It catalyses the reaction 2-formamido-N(1)-(5-O-phospho-beta-D-ribosyl)acetamidine + ATP = 5-amino-1-(5-phospho-beta-D-ribosyl)imidazole + ADP + phosphate + H(+). It participates in purine metabolism; IMP biosynthesis via de novo pathway; 5-amino-1-(5-phospho-D-ribosyl)imidazole from N(2)-formyl-N(1)-(5-phospho-D-ribosyl)glycinamide: step 2/2. This is Phosphoribosylformylglycinamidine cyclo-ligase from Agathobacter rectalis (strain ATCC 33656 / DSM 3377 / JCM 17463 / KCTC 5835 / VPI 0990) (Eubacterium rectale).